The sequence spans 194 residues: Glycerol-3-phosphate acyltransferase (194 aa).

Transmembrane regions (helical) follow at residues 3 to 23 (IALL…LIVG), 47 to 67 (VLGK…GVLP), 78 to 97 (IHGI…PIYL), 112 to 132 (ILGV…TLLF), and 153 to 173 (LFFD…LIII).

It belongs to the PlsY family. In terms of assembly, probably interacts with PlsX.

It is found in the cell membrane. The catalysed reaction is an acyl phosphate + sn-glycerol 3-phosphate = a 1-acyl-sn-glycero-3-phosphate + phosphate. Its pathway is lipid metabolism; phospholipid metabolism. Catalyzes the transfer of an acyl group from acyl-phosphate (acyl-PO(4)) to glycerol-3-phosphate (G3P) to form lysophosphatidic acid (LPA). This enzyme utilizes acyl-phosphate as fatty acyl donor, but not acyl-CoA or acyl-ACP. The protein is Glycerol-3-phosphate acyltransferase of Macrococcus caseolyticus (strain JCSC5402) (Macrococcoides caseolyticum).